Consider the following 454-residue polypeptide: Pup--protein ligase (454 aa).

Glutamate 9 is a Mg(2+) binding site. Residue arginine 53 coordinates ATP. Tyrosine 55 is a Mg(2+) binding site. Aspartate 57 serves as the catalytic Proton acceptor. A Mg(2+)-binding site is contributed by glutamate 63. ATP is bound by residues threonine 66 and tryptophan 420.

Belongs to the Pup ligase/Pup deamidase family. Pup-conjugating enzyme subfamily.

The enzyme catalyses ATP + [prokaryotic ubiquitin-like protein]-L-glutamate + [protein]-L-lysine = ADP + phosphate + N(6)-([prokaryotic ubiquitin-like protein]-gamma-L-glutamyl)-[protein]-L-lysine.. It functions in the pathway protein degradation; proteasomal Pup-dependent pathway. Its pathway is protein modification; protein pupylation. Catalyzes the covalent attachment of the prokaryotic ubiquitin-like protein modifier Pup to the proteasomal substrate proteins, thereby targeting them for proteasomal degradation. This tagging system is termed pupylation. The ligation reaction involves the side-chain carboxylate of the C-terminal glutamate of Pup and the side-chain amino group of a substrate lysine. This Arthrobacter sp. (strain FB24) protein is Pup--protein ligase.